The following is a 596-amino-acid chain: Chloride intracellular channel protein 6 (596 aa).

The interval Met-1–Glu-360 is disordered. The span at Leu-34–Arg-48 shows a compositional bias: basic and acidic residues. Ser-40 carries the post-translational modification Phosphoserine. The segment covering Gly-65 to Gly-74 has biased composition (gly residues). Positions Gly-83–Ala-98 are enriched in low complexity. A compositionally biased stretch (polar residues) spans Ser-118–Asp-130. Residues Asp-148–Ser-160 show a composition bias toward acidic residues. Composition is skewed to low complexity over residues Gly-197 to Gln-213 and Gly-225 to Gly-244. Residues Thr-246–Gly-290 show a composition bias toward basic and acidic residues. Ser-304 is modified (phosphoserine). Positions Glu-338–Asn-348 are enriched in basic and acidic residues. The short motif at Cys-379–Ser-382 is the G-site element. The chain crosses the membrane as a helical span at residues Phe-381–Val-401. The GST C-terminal domain occupies Asp-425–Lys-596.

This sequence belongs to the chloride channel CLIC family. Monomer (soluble state). Interacts with dopamine receptors DRD2, DRD3 and DRD4. Post-translationally, phosphorylated.

Its subcellular location is the cytoplasm. It is found in the cell membrane. The enzyme catalyses chloride(in) = chloride(out). Channel activity is redox- and pH-regulated. Inhibited by IAA-94. In terms of biological role, in the soluble state, catalyzes glutaredoxin-like thiol disulfide exchange reactions with reduced glutathione as electron donor. Can insert into membranes and form voltage-dependent chloride-selective channels. The channel opens upon membrane depolarization at positive voltages and closes at negative membrane voltages. May play a critical role in water-secreting cells, possibly through the regulation of chloride ion transport. The protein is Chloride intracellular channel protein 6 (Clic6) of Mus musculus (Mouse).